The primary structure comprises 454 residues: MSLDIVILAAGQGTRMRSALPKVLHPVAGNSMLGHVVATARQLQPQGIHVVIGHGAERVRERLAADDLNFVLQAEQLGTGHAVAQALPALSAERVLILYGDVPLIEADTLRRLLAQVGPERLALLTVDLVDPSGYGRIVRDAAGRVVAIVEHKDASPEQRAICEGNTGILAVPGARLADWLGRLSNDNVQGEYYLTDVIAMAVADGLTIATEQPQDAMEVQGANDRLQLAQLERHYQSRVARRLMAQGVTLRDPARFDLRGEVEVGRDVLIDVNVILEGKVIIEDGVEIGPNCTIKDSTLRRGAQVKANSHLEGAELGEGADCGPFARLRPGAVLGAKAHVGNFVELKNAVLGEGAKAGHLSYLGDAEIGARTNIGAGTITCNYDGANKFRTVMGEDVFIGSNSALVAPVELGAGATTGAGSVITEDVPAGNLALGRGRQRNIEGWQRPTKQKK.

A pyrophosphorylase region spans residues 1–226 (MSLDIVILAA…AMEVQGANDR (226 aa)). Residues 8–11 (LAAG), K22, Q73, 78–79 (GT), 99–101 (YGD), G136, E151, N166, and N224 each bind UDP-N-acetyl-alpha-D-glucosamine. D101 is a Mg(2+) binding site. A Mg(2+)-binding site is contributed by N224. The interval 227-247 (LQLAQLERHYQSRVARRLMAQ) is linker. The N-acetyltransferase stretch occupies residues 248–454 (GVTLRDPARF…GWQRPTKQKK (207 aa)). Positions 330 and 348 each coordinate UDP-N-acetyl-alpha-D-glucosamine. The Proton acceptor role is filled by H360. UDP-N-acetyl-alpha-D-glucosamine contacts are provided by Y363 and N374. Residues A377, 383–384 (NY), S402, A420, and R437 contribute to the acetyl-CoA site.

The protein in the N-terminal section; belongs to the N-acetylglucosamine-1-phosphate uridyltransferase family. This sequence in the C-terminal section; belongs to the transferase hexapeptide repeat family. In terms of assembly, homotrimer. It depends on Mg(2+) as a cofactor.

It is found in the cytoplasm. It catalyses the reaction alpha-D-glucosamine 1-phosphate + acetyl-CoA = N-acetyl-alpha-D-glucosamine 1-phosphate + CoA + H(+). The enzyme catalyses N-acetyl-alpha-D-glucosamine 1-phosphate + UTP + H(+) = UDP-N-acetyl-alpha-D-glucosamine + diphosphate. The protein operates within nucleotide-sugar biosynthesis; UDP-N-acetyl-alpha-D-glucosamine biosynthesis; N-acetyl-alpha-D-glucosamine 1-phosphate from alpha-D-glucosamine 6-phosphate (route II): step 2/2. It functions in the pathway nucleotide-sugar biosynthesis; UDP-N-acetyl-alpha-D-glucosamine biosynthesis; UDP-N-acetyl-alpha-D-glucosamine from N-acetyl-alpha-D-glucosamine 1-phosphate: step 1/1. Its pathway is bacterial outer membrane biogenesis; LPS lipid A biosynthesis. In terms of biological role, catalyzes the last two sequential reactions in the de novo biosynthetic pathway for UDP-N-acetylglucosamine (UDP-GlcNAc). The C-terminal domain catalyzes the transfer of acetyl group from acetyl coenzyme A to glucosamine-1-phosphate (GlcN-1-P) to produce N-acetylglucosamine-1-phosphate (GlcNAc-1-P), which is converted into UDP-GlcNAc by the transfer of uridine 5-monophosphate (from uridine 5-triphosphate), a reaction catalyzed by the N-terminal domain. In Azotobacter vinelandii (strain DJ / ATCC BAA-1303), this protein is Bifunctional protein GlmU.